The following is a 422-amino-acid chain: GTPase Obg (422 aa).

The region spanning 1–156 (MKFIDEVNVL…FALRLVLKVL (156 aa)) is the Obg domain. Residues 157 to 324 (ADVGLVGKPS…LKAAIFKMLE (168 aa)) form the OBG-type G domain. Residues 163-170 (GKPSAGKS), 188-192 (FTTLV), 209-212 (DLPG), 278-281 (NKSD), and 305-307 (SAL) contribute to the GTP site. Mg(2+) is bound by residues serine 170 and threonine 190. Residues 342-420 (NITLDRDALK…IGNFEFDWSD (79 aa)) enclose the OCT domain.

Belongs to the TRAFAC class OBG-HflX-like GTPase superfamily. OBG GTPase family. Monomer. The cofactor is Mg(2+).

The protein localises to the cytoplasm. Its function is as follows. An essential GTPase which binds GTP, GDP and possibly (p)ppGpp with moderate affinity, with high nucleotide exchange rates and a fairly low GTP hydrolysis rate. Plays a role in control of the cell cycle, stress response, ribosome biogenesis and in those bacteria that undergo differentiation, in morphogenesis control. The chain is GTPase Obg from Metamycoplasma arthritidis (strain 158L3-1) (Mycoplasma arthritidis).